The primary structure comprises 371 residues: Histidinol-phosphate aminotransferase (371 aa).

Residue K229 is modified to N6-(pyridoxal phosphate)lysine.

The protein belongs to the class-II pyridoxal-phosphate-dependent aminotransferase family. Histidinol-phosphate aminotransferase subfamily. Homodimer. Requires pyridoxal 5'-phosphate as cofactor.

The catalysed reaction is L-histidinol phosphate + 2-oxoglutarate = 3-(imidazol-4-yl)-2-oxopropyl phosphate + L-glutamate. Its pathway is amino-acid biosynthesis; L-histidine biosynthesis; L-histidine from 5-phospho-alpha-D-ribose 1-diphosphate: step 7/9. This is Histidinol-phosphate aminotransferase from Roseiflexus castenholzii (strain DSM 13941 / HLO8).